We begin with the raw amino-acid sequence, 96 residues long: Neutrophil defensin 3 (96 aa).

The N-terminal stretch at 1 to 19 is a signal peptide; it reads MRTLVILAAILLVALQAQA. Residues 20-66 constitute a propeptide that is removed on maturation; that stretch reads EPLQARTDEATAAQEQIPTDNPEVVVSLAWDESLAPKDSVPGLRKNM. 3 cysteine pairs are disulfide-bonded: cysteine 68–cysteine 96, cysteine 70–cysteine 85, and cysteine 75–cysteine 95.

Its subcellular location is the secreted. Has bacteriostatic activity against Gram-positive bacteria S.aureus and L.monocytogenes and Gram-negative bacterium E.coli and antifungal activity against C.neoformans. The chain is Neutrophil defensin 3 from Macaca mulatta (Rhesus macaque).